Consider the following 543-residue polypeptide: Glucose-6-phosphate isomerase (543 aa).

Glu353 serves as the catalytic Proton donor. Catalysis depends on residues His384 and Lys504.

Belongs to the GPI family.

It localises to the cytoplasm. It carries out the reaction alpha-D-glucose 6-phosphate = beta-D-fructose 6-phosphate. It functions in the pathway carbohydrate biosynthesis; gluconeogenesis. Its pathway is carbohydrate degradation; glycolysis; D-glyceraldehyde 3-phosphate and glycerone phosphate from D-glucose: step 2/4. Its function is as follows. Catalyzes the reversible isomerization of glucose-6-phosphate to fructose-6-phosphate. This Roseiflexus sp. (strain RS-1) protein is Glucose-6-phosphate isomerase.